Consider the following 207-residue polypeptide: p-benzoquinone reductase (207 aa).

Residues 5-196 (IQIVFYSSYG…QIARFQGKHV (192 aa)) form the Flavodoxin-like domain. Residues 11–16 (SSYGHI), 84–86 (TRF), 119–125 (STASQHG), and histidine 140 each bind FMN. Tyrosine 13 is an NADP(+) binding site.

The protein belongs to the WrbA family. Homodimer. FMN serves as cofactor.

The enzyme catalyses 1,4-benzoquinone + NADPH + H(+) = hydroquinone + NADP(+). Its pathway is xenobiotic degradation; 4-nitrophenol degradation. Involved in the degradation of para-nitrophenol (PNP). Catalyzes the reduction of p-benzoquinone to hydroquinone. This is p-benzoquinone reductase (pnpB) from Pseudomonas sp. (strain WBC-3).